We begin with the raw amino-acid sequence, 120 residues long: A-type ATP synthase subunit F (120 aa).

Belongs to the V-ATPase F subunit family. In terms of assembly, has multiple subunits with at least A(3), B(3), C, D, E, F, H, I and proteolipid K(x).

The protein resides in the cell membrane. In terms of biological role, component of the A-type ATP synthase that produces ATP from ADP in the presence of a proton gradient across the membrane. The protein is A-type ATP synthase subunit F of Halobacterium salinarum (strain ATCC 29341 / DSM 671 / R1).